The primary structure comprises 485 residues: tRNA sulfurtransferase (485 aa).

The THUMP domain occupies 61–165 (EELIALLQRI…DDKMMLVKTR (105 aa)). ATP is bound by residues 183 to 184 (LI), Lys265, Gly287, and Gln296. A disulfide bond links Cys344 and Cys456. Residues 404 to 483 (LGENEVILDI…FSNVRVFAKN (80 aa)) form the Rhodanese domain. Cys456 functions as the Cysteine persulfide intermediate in the catalytic mechanism.

It belongs to the ThiI family.

Its subcellular location is the cytoplasm. The enzyme catalyses [ThiI sulfur-carrier protein]-S-sulfanyl-L-cysteine + a uridine in tRNA + 2 reduced [2Fe-2S]-[ferredoxin] + ATP + H(+) = [ThiI sulfur-carrier protein]-L-cysteine + a 4-thiouridine in tRNA + 2 oxidized [2Fe-2S]-[ferredoxin] + AMP + diphosphate. It carries out the reaction [ThiS sulfur-carrier protein]-C-terminal Gly-Gly-AMP + S-sulfanyl-L-cysteinyl-[cysteine desulfurase] + AH2 = [ThiS sulfur-carrier protein]-C-terminal-Gly-aminoethanethioate + L-cysteinyl-[cysteine desulfurase] + A + AMP + 2 H(+). It participates in cofactor biosynthesis; thiamine diphosphate biosynthesis. Its function is as follows. Catalyzes the ATP-dependent transfer of a sulfur to tRNA to produce 4-thiouridine in position 8 of tRNAs, which functions as a near-UV photosensor. Also catalyzes the transfer of sulfur to the sulfur carrier protein ThiS, forming ThiS-thiocarboxylate. This is a step in the synthesis of thiazole, in the thiamine biosynthesis pathway. The sulfur is donated as persulfide by IscS. The sequence is that of tRNA sulfurtransferase from Haemophilus influenzae (strain 86-028NP).